The chain runs to 559 residues: Poly(U)-binding-splicing factor PUF60 (559 aa).

The interval 1–516 is inhibits homodimerization; sequence MATATIALQV…EDAEIIVKIF (516 aa). Glycyl lysine isopeptide (Lys-Gly) (interchain with G-Cter in SUMO2) cross-links involve residues glutamine 14 and lysine 43. Position 60 is a phosphothreonine (threonine 60). The interval 77–559 is inhibits transcriptional repression, interaction with ERCC3 and apoptosis induction; it reads QSIKSVLVKQ…ERFDNSDLSA (483 aa). Lysine 80 participates in a covalent cross-link: Glycyl lysine isopeptide (Lys-Gly) (interchain with G-Cter in SUMO2). Serine 112 is modified (phosphoserine). 2 consecutive RRM domains span residues 129-207 and 226-304; these read CRVY…RPSN and NRIY…KAVT. A Phosphoserine modification is found at serine 244. Lysine 251 is subject to N6-acetyllysine. Position 314 is a phosphothreonine (threonine 314). The segment at 416 to 437 is disordered; sequence KKEKEEEELFPESERPEMLSEQ. Lysine 419 participates in a covalent cross-link: Glycyl lysine isopeptide (Lys-Gly) (interchain with G-Cter in SUMO2). The span at 427–437 shows a compositional bias: basic and acidic residues; that stretch reads ESERPEMLSEQ. Lysine 454 bears the N6-acetyllysine mark. Lysine 458 participates in a covalent cross-link: Glycyl lysine isopeptide (Lys-Gly) (interchain with G-Cter in SUMO2). Positions 462–549 constitute an RRM 3; atypical domain; that stretch reads TVMVLRNMVD…RKVVAEVYDQ (88 aa).

This sequence belongs to the RRM half pint family. Homodimer. Associates with the spliceosome. Found in a complex with RO60 and Y5 RNA. Found in a complex with FUBP1 and far upstream element (FUSE) DNA segment. Interacts directly with ERCC3. Interacts with CDK7 and GTF2H1. Interacts with SRSF11/P54. Does not interact with ERCC3 in xeroderma pigmentosum complementation group B (XPB) cells. Interacts with ARGLU1; interaction may be involved in ARGLU1-mediated modulation of alternative splicing. Isoform 2 is expressed in colonic epithelium and colorectal epithelium cancer (at protein level). Isoform 6 is expressed in colorectal epithelial cancer but below detection level in colonic epithelium. Expressed in heart, brain, placenta, lung, liver, skeletal muscle, kidney, pancreas, spleen, thymus, prostate, testis, ovary, small intestine, colon and peripheral blood leukocytes.

It localises to the nucleus. Its function is as follows. DNA- and RNA-binding protein, involved in several nuclear processes such as pre-mRNA splicing, apoptosis and transcription regulation. In association with FUBP1 regulates MYC transcription at the P2 promoter through the core-TFIIH basal transcription factor. Acts as a transcriptional repressor through the core-TFIIH basal transcription factor. Represses FUBP1-induced transcriptional activation but not basal transcription. Decreases ERCC3 helicase activity. Does not repress TFIIH-mediated transcription in xeroderma pigmentosum complementation group B (XPB) cells. Is also involved in pre-mRNA splicing. Promotes splicing of an intron with weak 3'-splice site and pyrimidine tract in a cooperative manner with U2AF2. Involved in apoptosis induction when overexpressed in HeLa cells. Isoform 6 failed to repress MYC transcription and inhibited FIR-induced apoptosis in colorectal cancer. Isoform 6 may contribute to tumor progression by enabling increased MYC expression and greater resistance to apoptosis in tumors than in normal cells. Modulates alternative splicing of several mRNAs. Binds to relaxed DNA of active promoter regions. Binds to the pyrimidine tract and 3'-splice site regions of pre-mRNA; binding is enhanced in presence of U2AF2. Binds to Y5 RNA in association with RO60. Binds to poly(U) RNA. This is Poly(U)-binding-splicing factor PUF60 from Homo sapiens (Human).